The chain runs to 336 residues: Eukaryotic translation initiation factor 3 subunit H (336 aa).

One can recognise an MPN domain in the interval 21 to 154; the sequence is VQCDGLAAMK…LKAYRLTPQA (134 aa).

It belongs to the eIF-3 subunit H family. In terms of assembly, component of the eukaryotic translation initiation factor 3 (eIF-3) complex.

Its subcellular location is the cytoplasm. Its function is as follows. Component of the eukaryotic translation initiation factor 3 (eIF-3) complex, which is involved in protein synthesis of a specialized repertoire of mRNAs and, together with other initiation factors, stimulates binding of mRNA and methionyl-tRNAi to the 40S ribosome. The eIF-3 complex specifically targets and initiates translation of a subset of mRNAs involved in cell proliferation. The protein is Eukaryotic translation initiation factor 3 subunit H of Culex quinquefasciatus (Southern house mosquito).